The primary structure comprises 57 residues: UPF0391 membrane protein RPA3029 (57 aa).

Transmembrane regions (helical) follow at residues 6–26 (WALI…TGIS) and 35–55 (ILFY…FTIF).

This sequence belongs to the UPF0391 family.

It is found in the cell membrane. This Rhodopseudomonas palustris (strain ATCC BAA-98 / CGA009) protein is UPF0391 membrane protein RPA3029.